The sequence spans 130 residues: Blasticidin-S deaminase (130 aa).

Residues 1–129 (MPLSQEESTL…ELLPSGYMNR (129 aa)) enclose the CMP/dCMP-type deaminase domain. Serine 28 provides a ligand contact to substrate. Cysteine 54 provides a ligand contact to Zn(2+). The active-site Proton donor is the glutamate 56. Arginine 82 provides a ligand contact to substrate. Zn(2+)-binding residues include cysteine 88 and cysteine 91. Tyrosine 126 provides a ligand contact to substrate.

The protein belongs to the cytidine and deoxycytidylate deaminase family. As to quaternary structure, homotetramer. Zn(2+) serves as cofactor.

It catalyses the reaction blasticidin S + H2O + H(+) = deaminohydroxyblasticidin S + NH4(+). In terms of biological role, catalyzes the deamination of the cytosine moiety of the antibiotics blasticidin S, cytomycin and acetylblasticidin S. In Aspergillus terreus (strain NIH 2624 / FGSC A1156), this protein is Blasticidin-S deaminase (bsd).